We begin with the raw amino-acid sequence, 264 residues long: tRNA pseudouridine synthase A (264 aa).

Residue D51 is the Nucleophile of the active site. Y109 is a substrate binding site.

It belongs to the tRNA pseudouridine synthase TruA family. In terms of assembly, homodimer.

The catalysed reaction is uridine(38/39/40) in tRNA = pseudouridine(38/39/40) in tRNA. In terms of biological role, formation of pseudouridine at positions 38, 39 and 40 in the anticodon stem and loop of transfer RNAs. The protein is tRNA pseudouridine synthase A of Pasteurella multocida (strain Pm70).